The sequence spans 873 residues: Potassium voltage-gated channel subfamily KQT member 3 (873 aa).

A disordered region spans residues 1–41 (MGLKARRAAGAAGGGGGEGGGGGGGAANPAGGDSAVAGDEE). Topologically, residues 1-121 (MGLKARRAAG…IYDALERPRG (121 aa)) are cytoplasmic. Over residues 11–26 (AAGGGGGEGGGGGGGA) the composition is skewed to gly residues. Thr-82 is modified (phosphothreonine). Residues 122–144 (WALLYHALVFLIVLGCLILAVLT) traverse the membrane as a helical segment. Over 145–154 (TFKEYETVSG) the chain is Extracellular. The helical transmembrane segment at 155-176 (DWLLLLETFAIFIFGAEFALRI) threads the bilayer. At 177–194 (WAAGCCCRYKGWRGRLKF) the chain is on the cytoplasmic side. Residues 195-214 (ARKPLCMLDIFVLIASVPVV) traverse the membrane as a helical segment. The Extracellular portion of the chain corresponds to 215–226 (AVGNQGNVLATS). Residues 227–245 (LRSLRFLQILRMLRMDRRG) traverse the membrane as a helical; Voltage-sensor segment. An a 1,2-diacyl-sn-glycero-3-phospho-(1D-myo-inositol-4,5-bisphosphate)-binding site is contributed by Arg-244. The Cytoplasmic segment spans residues 246-257 (GTWKLLGSAICA). Residues 258–283 (HSKELITAWYIGFLTLILSSFLVYLV) traverse the membrane as a helical segment. Lys-260 contacts a 1,2-diacyl-sn-glycero-3-phospho-(1D-myo-inositol-4,5-bisphosphate). Residues 284 to 303 (EKDVPEMDAQGEEMKEEFET) are Extracellular-facing. Positions 304–316 (YADALWWGLITLA) form an intramembrane region, pore-forming. The short motif at 317–322 (TIGYGD) is the Selectivity filter element. Residues 317–327 (TIGYGDKTPKT) are Extracellular-facing. A helical transmembrane segment spans residues 328–354 (WEGRLIAATFSLIGVSFFALPAGILGS). The Cytoplasmic portion of the chain corresponds to 355 to 873 (GLALKVQEQH…SIWTPSNKPT (519 aa)). Residues 357 to 538 (ALKVQEQHRQ…RLYKKKFKET (182 aa)) are mediates interaction with calmodulin. Lys-367 lines the a 1,2-diacyl-sn-glycero-3-phospho-(1D-myo-inositol-4,5-bisphosphate) pocket. Disordered regions lie at residues 575–603 (PGPP…PRNE), 723–742 (RGGP…GSTY), and 766–873 (ELQG…NKPT). 3 stretches are compositionally biased toward polar residues: residues 588–601 (KGSA…QSPR), 725–741 (GPSS…SGST), and 844–873 (DPFT…NKPT).

Belongs to the potassium channel family. KQT (TC 1.A.1.15) subfamily. Kv7.3/KCNQ3 sub-subfamily. As to quaternary structure, heterotetramer with KCNQ2; forms heterotetrameric M-channel responsible for the native M-current. Interacts with calmodulin; the interaction is calcium-independent, constitutive and participates in the proper assembly of a functional M-channel. Heteromultimer with KCNQ5. May associate with KCNE2. Interacts with IQCJ-SCHIP1. Interacts (via the pore module) with SLC5A3/SMIT1; forms a coregulatory complex that alters ion selectivity, voltage dependence and gating kinetics of the channel. KCNQ2/KCNQ3 are ubiquitinated by NEDD4L. Ubiquitination leads to protein degradation. Degradation induced by NEDD4L is inhibited by USP36. As to expression, expressed in brain and sympathetic ganglia. In brain, expressed in cortex, hippocampus and at much lower levels in cerebellum. In sympathetic ganglia, expressed at approximately equal levels in both superior cervical ganglia and prevertebral ganglia.

Its subcellular location is the cell membrane. It carries out the reaction K(+)(in) = K(+)(out). The enzyme catalyses Rb(+)(in) = Rb(+)(out). The catalysed reaction is Cs(+)(in) = Cs(+)(out). It catalyses the reaction Na(+)(in) = Na(+)(out). Phosphatidylinositol-4,5-bisphosphate (PIP2) potentiates the activation of KCNQ channels by enhancing the electro-mechanical coupling of the voltage-sensing domain (VSD) and the pore-forming domain (PD). In the closed state of the channel, PIP2 is anchored at the S2-S3 loop; upon channel activation, PIP2 interacts with the S4-S5 linker and is involved in channel gating. Calcium suppresses KCNQ2-KCNQ3 channel currents, with calcium-bound calmodulin inducing a change in channel configuration which leads to the reduction of channel affinity for PIP2 and subsequent current suppression. M-channel is blocked by XE991. Its function is as follows. Pore-forming subunit of the voltage-gated potassium (Kv) M-channel which is responsible for the M-current, a key controller of neuronal excitability. M-channel is composed of pore-forming subunits KCNQ2 and KCNQ3 assembled as heterotetramers, each subunit containing a voltage sensing domain (VSD) and a pore-forming domain (PD). The native M-current has a slowly activating and deactivating potassium conductance which plays a critical role in determining the subthreshold electrical excitability of neurons as well as the responsiveness to synaptic inputs. M-channel is selectively permeable in vitro to other cations besides potassium, in decreasing order of affinity K(+) &gt; Rb(+) &gt; Cs(+) &gt; Na(+). M-channel association with SLC5A3/SMIT1 alters channel ion selectivity, increasing Na(+) and Cs(+) permeation relative to K(+). Suppressed by activation of M1 muscarinic acetylcholine receptors. KCNQ3 also associates with KCNQ5 to form a functional channel in vitro and may also contribute to the M-current in brain. The chain is Potassium voltage-gated channel subfamily KQT member 3 from Rattus norvegicus (Rat).